Here is a 251-residue protein sequence, read N- to C-terminus: Triosephosphate isomerase (251 aa).

Asn-9–Lys-11 lines the substrate pocket. The Electrophile role is filled by His-96. Glu-168 acts as the Proton acceptor in catalysis. Residues Gly-174, Ser-214, and Gly-235–Gly-236 contribute to the substrate site.

The protein belongs to the triosephosphate isomerase family. In terms of assembly, homodimer.

Its subcellular location is the cytoplasm. It carries out the reaction D-glyceraldehyde 3-phosphate = dihydroxyacetone phosphate. It participates in carbohydrate biosynthesis; gluconeogenesis. It functions in the pathway carbohydrate degradation; glycolysis; D-glyceraldehyde 3-phosphate from glycerone phosphate: step 1/1. Functionally, involved in the gluconeogenesis. Catalyzes stereospecifically the conversion of dihydroxyacetone phosphate (DHAP) to D-glyceraldehyde-3-phosphate (G3P). The sequence is that of Triosephosphate isomerase from Porphyromonas gingivalis (strain ATCC BAA-308 / W83).